The chain runs to 284 residues: D-tagatose-1,6-bisphosphate aldolase subunit GatY (284 aa).

The active-site Proton donor is the D82. H83 and H180 together coordinate Zn(2+). Dihydroxyacetone phosphate is bound at residue G181. H208 provides a ligand contact to Zn(2+). Dihydroxyacetone phosphate-binding positions include 209–211 (GAS) and 230–233 (NVAT).

It belongs to the class II fructose-bisphosphate aldolase family. TagBP aldolase GatY subfamily. As to quaternary structure, forms a complex with GatZ. The cofactor is Zn(2+).

The enzyme catalyses D-tagatofuranose 1,6-bisphosphate = D-glyceraldehyde 3-phosphate + dihydroxyacetone phosphate. It functions in the pathway carbohydrate metabolism; D-tagatose 6-phosphate degradation; D-glyceraldehyde 3-phosphate and glycerone phosphate from D-tagatose 6-phosphate: step 2/2. In terms of biological role, catalytic subunit of the tagatose-1,6-bisphosphate aldolase GatYZ, which catalyzes the reversible aldol condensation of dihydroxyacetone phosphate (DHAP or glycerone-phosphate) with glyceraldehyde 3-phosphate (G3P) to produce tagatose 1,6-bisphosphate (TBP). Requires GatZ subunit for full activity and stability. Is involved in the catabolism of galactitol. The protein is D-tagatose-1,6-bisphosphate aldolase subunit GatY of Shigella flexneri serotype 5b (strain 8401).